Reading from the N-terminus, the 306-residue chain is Cilia- and flagella-associated protein 73 (306 aa).

Coiled-coil stretches lie at residues 49–139 (LQAQ…QRLE) and 197–231 (QSEKQDEMLNLNQQRTQLVEQLEAAREHRQQWESK).

The protein belongs to the CFAP73 family.

It localises to the cytoplasm. The protein localises to the cytoskeleton. The protein resides in the cilium axoneme. In terms of biological role, may play a role in ciliary/flagellar motility by regulating the assembly and the activity of axonemal inner dynein arm. This chain is Cilia- and flagella-associated protein 73, found in Mus musculus (Mouse).